The sequence spans 203 residues: Peptide deformylase (203 aa).

Residues Cys130 and His173 each coordinate Fe cation. Glu174 is a catalytic residue. Fe cation is bound at residue His177.

The protein belongs to the polypeptide deformylase family. Fe(2+) serves as cofactor.

The catalysed reaction is N-terminal N-formyl-L-methionyl-[peptide] + H2O = N-terminal L-methionyl-[peptide] + formate. Functionally, removes the formyl group from the N-terminal Met of newly synthesized proteins. Requires at least a dipeptide for an efficient rate of reaction. N-terminal L-methionine is a prerequisite for activity but the enzyme has broad specificity at other positions. This chain is Peptide deformylase, found in Streptococcus pneumoniae serotype 19F (strain G54).